The primary structure comprises 158 residues: NAD(P)H-quinone oxidoreductase subunit N, organellar chromatophore (158 aa).

It belongs to the complex I NdhN subunit family. NDH-1 can be composed of about 15 different subunits; different subcomplexes with different compositions have been identified which probably have different functions.

It is found in the plastid. The protein resides in the organellar chromatophore thylakoid membrane. It catalyses the reaction a plastoquinone + NADH + (n+1) H(+)(in) = a plastoquinol + NAD(+) + n H(+)(out). It carries out the reaction a plastoquinone + NADPH + (n+1) H(+)(in) = a plastoquinol + NADP(+) + n H(+)(out). Functionally, NDH-1 shuttles electrons from an unknown electron donor, via FMN and iron-sulfur (Fe-S) centers, to quinones in the respiratory and/or the photosynthetic chain. The immediate electron acceptor for the enzyme in this species is believed to be plastoquinone. Couples the redox reaction to proton translocation, and thus conserves the redox energy in a proton gradient. In Paulinella chromatophora, this protein is NAD(P)H-quinone oxidoreductase subunit N, organellar chromatophore.